Here is a 424-residue protein sequence, read N- to C-terminus: Tyrosine--tRNA ligase (424 aa).

Position 37 (Y37) interacts with L-tyrosine. Positions 42-51 (ITADSLHVGH) match the 'HIGH' region motif. Y175 and Q179 together coordinate L-tyrosine. The short motif at 235-239 (KFGKT) is the 'KMSKS' region element. K238 is an ATP binding site. The 59-residue stretch at 356-414 (GNLQQLLVYSRLALSRSHAKSMIVSNSVRINNIIQNNPFYILCNRDKMYHKYTLLSRGK) folds into the S4 RNA-binding domain.

Belongs to the class-I aminoacyl-tRNA synthetase family. TyrS type 1 subfamily. In terms of assembly, homodimer.

It localises to the cytoplasm. The catalysed reaction is tRNA(Tyr) + L-tyrosine + ATP = L-tyrosyl-tRNA(Tyr) + AMP + diphosphate + H(+). Functionally, catalyzes the attachment of tyrosine to tRNA(Tyr) in a two-step reaction: tyrosine is first activated by ATP to form Tyr-AMP and then transferred to the acceptor end of tRNA(Tyr). The sequence is that of Tyrosine--tRNA ligase from Buchnera aphidicola subsp. Baizongia pistaciae (strain Bp).